The sequence spans 342 residues: Tetraacyldisaccharide 4'-kinase (342 aa).

ATP is bound at residue 68–75 (TVGGTGKT).

The protein belongs to the LpxK family.

It catalyses the reaction a lipid A disaccharide + ATP = a lipid IVA + ADP + H(+). It functions in the pathway glycolipid biosynthesis; lipid IV(A) biosynthesis; lipid IV(A) from (3R)-3-hydroxytetradecanoyl-[acyl-carrier-protein] and UDP-N-acetyl-alpha-D-glucosamine: step 6/6. In terms of biological role, transfers the gamma-phosphate of ATP to the 4'-position of a tetraacyldisaccharide 1-phosphate intermediate (termed DS-1-P) to form tetraacyldisaccharide 1,4'-bis-phosphate (lipid IVA). The chain is Tetraacyldisaccharide 4'-kinase from Burkholderia multivorans (strain ATCC 17616 / 249).